A 216-amino-acid chain; its full sequence is FMN-dependent NADH:quinone oxidoreductase (216 aa).

FMN is bound by residues Ser15 to Ser17 and Ser139 to Gly142.

The protein belongs to the azoreductase type 1 family. In terms of assembly, homodimer. Requires FMN as cofactor.

The enzyme catalyses 2 a quinone + NADH + H(+) = 2 a 1,4-benzosemiquinone + NAD(+). It carries out the reaction N,N-dimethyl-1,4-phenylenediamine + anthranilate + 2 NAD(+) = 2-(4-dimethylaminophenyl)diazenylbenzoate + 2 NADH + 2 H(+). Functionally, quinone reductase that provides resistance to thiol-specific stress caused by electrophilic quinones. In terms of biological role, also exhibits azoreductase activity. Catalyzes the reductive cleavage of the azo bond in aromatic azo compounds to the corresponding amines. In Acidovorax ebreus (strain TPSY) (Diaphorobacter sp. (strain TPSY)), this protein is FMN-dependent NADH:quinone oxidoreductase.